The primary structure comprises 801 residues: Fibroblast growth factor receptor 3 (801 aa).

Positions 1 to 20 (MVVPACVLVFCVAVVAGATS) are cleaved as a signal peptide. Over 21-369 (EPPGPEQRVV…TDEAGSVYAG (349 aa)) the chain is Extracellular. In terms of domain architecture, Ig-like C2-type 1 spans 22 to 124 (PPGPEQRVVR…VLCHFSVRVT (103 aa)). Cys59 and Cys107 are joined by a disulfide. The N-linked (GlcNAc...) asparagine glycan is linked to Asn96. The disordered stretch occupies residues 125-146 (DAPSSGDDEDGEDVAEDTGAPY). Over residues 130 to 140 (GDDEDGEDVAE) the composition is skewed to acidic residues. 2 Ig-like C2-type domains span residues 145-238 (PYWT…YTLD) and 247-349 (PILQ…AWLV). Cys170 and Cys222 are oxidised to a cystine. Residues Asn219, Asn256, Asn288, Asn309, and Asn322 are each glycosylated (N-linked (GlcNAc...) asparagine). Cys269 and Cys333 are disulfide-bonded. The helical transmembrane segment at 370–390 (VLSYGVVFFLFILVVAAVILC) threads the bilayer. Residues 391–801 (RLRSPPKKGL…GPPSNGGPRT (411 aa)) are Cytoplasmic-facing. Residues Ser438 and Ser439 each carry the phosphoserine modification. A Protein kinase domain is found at 466-756 (LTLGKPLGEG…LTVTSTDEYL (291 aa)). ATP is bound by residues 472–480 (LGEGCFGQV) and Lys502. The Proton acceptor role is filled by Asp611. 4 positions are modified to phosphotyrosine; by autocatalysis: Tyr641, Tyr642, Tyr719, and Tyr755. The disordered stretch occupies residues 762-801 (FEQYSPGGQDTPSSSSSGDDSVFTHDLLPPGPPSNGGPRT). Residues 766–782 (SPGGQDTPSSSSSGDDS) are compositionally biased toward low complexity. A compositionally biased stretch (pro residues) spans 790 to 801 (PPGPPSNGGPRT).

Belongs to the protein kinase superfamily. Tyr protein kinase family. Fibroblast growth factor receptor subfamily. Monomer. Homodimer after ligand binding. Interacts with FGF1, FGF2, FGF4, FGF6; FGF8, FGF9, FGF10, FGF17, FGF18, FGF19, FGF20 and FGF23 (in vitro). Interacts with KLB. Affinity for fibroblast growth factors (FGFs) is increased by heparan sulfate glycosaminoglycans that function as coreceptors. Likewise, KLB increases the affinity for FGF19 and FGF21. Interacts with PIK3R1, PLCG1, SOCS1 and SOCS3. Post-translationally, autophosphorylated. Binding of FGF family members together with heparan sulfate proteoglycan or heparin promotes receptor dimerization and autophosphorylation on tyrosine residues. Autophosphorylation occurs in trans between the two FGFR molecules present in the dimer. Phosphorylation at Tyr-719 is essential for stimulation of cell proliferation and activation of PIK3R1, STAT1 and MAP kinase signaling. Phosphorylation at Tyr-755 is required for interaction with PIK3R1 and PLCG1. In terms of processing, ubiquitinated. Is rapidly ubiquitinated after ligand binding and autophosphorylation, leading to receptor internalization and degradation. Subject to both proteasomal and lysosomal degradation. N-glycosylated in the endoplasmic reticulum. The N-glycan chains undergo further maturation to an Endo H-resistant form in the Golgi apparatus. As to expression, in embryo, expressed in heart, lung, kidney, skin, head and liver but not in muscle. In adult, highest levels in brain. Also expressed in liver, lung, kidney, testis, ovary and uterus. Very low levels in heart, thymus, spleen and muscle.

The protein resides in the cell membrane. It is found in the cytoplasmic vesicle. Its subcellular location is the endoplasmic reticulum. It catalyses the reaction L-tyrosyl-[protein] + ATP = O-phospho-L-tyrosyl-[protein] + ADP + H(+). Present in an inactive conformation in the absence of bound ligand. Ligand binding leads to dimerization and activation by autophosphorylation on tyrosine residues. Tyrosine-protein kinase that acts as a cell-surface receptor for fibroblast growth factors and plays an essential role in the regulation of cell proliferation, differentiation and apoptosis. Plays an essential role in the regulation of chondrocyte differentiation, proliferation and apoptosis, and is required for normal skeleton development. Regulates both osteogenesis and postnatal bone mineralization by osteoblasts. Promotes apoptosis in chondrocytes, but can also promote cancer cell proliferation. Required for normal development of the inner ear. Phosphorylates PLCG1, CBL and FRS2. Ligand binding leads to the activation of several signaling cascades. Activation of PLCG1 leads to the production of the cellular signaling molecules diacylglycerol and inositol 1,4,5-trisphosphate. Phosphorylation of FRS2 triggers recruitment of GRB2, GAB1, PIK3R1 and SOS1, and mediates activation of RAS, MAPK1/ERK2, MAPK3/ERK1 and the MAP kinase signaling pathway, as well as of the AKT1 signaling pathway. Plays a role in the regulation of vitamin D metabolism. Mutations that lead to constitutive kinase activation or impair normal FGFR3 maturation, internalization and degradation lead to aberrant signaling. Over-expressed or constitutively activated FGFR3 promotes activation of STAT1, STAT5A and STAT5B. Plays a role in postnatal lung development. The chain is Fibroblast growth factor receptor 3 (Fgfr3) from Mus musculus (Mouse).